A 725-amino-acid polypeptide reads, in one-letter code: Catalase-peroxidase (725 aa).

The tryptophyl-tyrosyl-methioninium (Trp-Tyr) (with M-239) cross-link spans 90-213 (WHSAGTYRTG…LAAVQMGLIY (124 aa)). The active-site Proton acceptor is His91. Positions 213–239 (YVNPEGPNGNPDPVAAAKDIRETFARM) form a cross-link, tryptophyl-tyrosyl-methioninium (Tyr-Met) (with W-90). His254 is a binding site for heme b.

It belongs to the peroxidase family. Peroxidase/catalase subfamily. In terms of assembly, homodimer or homotetramer. The cofactor is heme b. Formation of the three residue Trp-Tyr-Met cross-link is important for the catalase, but not the peroxidase activity of the enzyme.

It carries out the reaction H2O2 + AH2 = A + 2 H2O. The catalysed reaction is 2 H2O2 = O2 + 2 H2O. Functionally, bifunctional enzyme with both catalase and broad-spectrum peroxidase activity. This is Catalase-peroxidase from Hahella chejuensis (strain KCTC 2396).